The primary structure comprises 503 residues: Maturase K (503 aa).

It belongs to the intron maturase 2 family. MatK subfamily.

Its subcellular location is the plastid. The protein resides in the chloroplast. In terms of biological role, usually encoded in the trnK tRNA gene intron. Probably assists in splicing its own and other chloroplast group II introns. This chain is Maturase K, found in Syzygium anisatum (Aniseed myrtle).